Consider the following 33-residue polypeptide: Cysteine-rich venom protein tripurin (33 aa).

This sequence belongs to the CRISP family. Post-translationally, contains 8 disulfide bonds. Expressed by the venom gland.

Its subcellular location is the secreted. Functionally, blocks contraction of smooth muscle elicited by high potassium-induced depolarization, but does not block caffeine-stimulated contraction. May target voltage-gated calcium channels on smooth muscle. The chain is Cysteine-rich venom protein tripurin from Trimeresurus purpureomaculatus (Mangrove pit viper).